The sequence spans 500 residues: Cryptochrome DASH (500 aa).

The Photolyase/cryptochrome alpha/beta domain maps to 4–138 (KTVLVWYRND…PVRSFWGTTL (135 aa)).

Belongs to the DNA photolyase class-1 family. It depends on FAD as a cofactor. Requires (6R)-5,10-methylene-5,6,7,8-tetrahydrofolate as cofactor.

May have a photoreceptor function. Binds DNA; probably functions as a transcriptional repressor. The sequence is that of Cryptochrome DASH (cry) from Gloeobacter violaceus (strain ATCC 29082 / PCC 7421).